The sequence spans 483 residues: 2-methylcitrate dehydratase (483 aa).

Belongs to the PrpD family. In terms of assembly, monomer.

The catalysed reaction is (2S,3S)-2-methylcitrate = 2-methyl-cis-aconitate + H2O. It carries out the reaction citrate = D-threo-isocitrate. It functions in the pathway organic acid metabolism; propanoate degradation. Its pathway is carbohydrate metabolism; tricarboxylic acid cycle; isocitrate from oxaloacetate: step 2/2. Functionally, involved in the catabolism of short chain fatty acids (SCFA) via the tricarboxylic acid (TCA)(acetyl degradation route) and via the 2-methylcitrate cycle I (propionate degradation route). Catalyzes the dehydration of 2-methylcitrate (2-MC) to yield the cis isomer of 2-methyl-aconitate. It is also able to catalyze the dehydration of citrate and the hydration of cis-aconitate at a lower rate. Due to its broad substrate specificity, it seems to be responsible for the residual aconitase activity of the acnAB-null mutant. This chain is 2-methylcitrate dehydratase, found in Escherichia coli (strain K12).